The primary structure comprises 545 residues: Probable intron-encoded endonuclease 4 (545 aa).

Transmembrane regions (helical) follow at residues 1–21, 30–50, 81–101, 119–139, 140–160, 177–197, and 200–220; these read MYLS…FFGR, LITC…FFEV, LTVA…IYSI, LFTF…MFVG, WEGV…RIAA, FLTI…YATV, and LAPY…LIGA. Residues 1–239 are ndh-5 exons 1 and 2 encoded; sequence MYLSIIILPL…HVWLPMAMEG (239 aa). The segment at 240-545 is ndh-5 intron 2 encoded; it reads FFSRAFLKLH…NNINKSDYNK (306 aa).

It in the N-terminal section; belongs to the complex I subunit 5 family. The protein in the C-terminal section; belongs to the LAGLIDADG endonuclease family.

It is found in the mitochondrion membrane. In terms of biological role, mitochondrial DNA endonuclease involved in intron homing. This is Probable intron-encoded endonuclease 4 from Neurospora crassa (strain ATCC 24698 / 74-OR23-1A / CBS 708.71 / DSM 1257 / FGSC 987).